The following is a 366-amino-acid chain: Acetylserotonin O-methyltransferase 2 (366 aa).

Gly-209, Asp-232, Asp-253, and Lys-267 together coordinate S-adenosyl-L-homocysteine. Residue His-271 is the Proton acceptor of the active site. Residues Glu-302 and Glu-332 contribute to the active site.

Belongs to the class I-like SAM-binding methyltransferase superfamily. Cation-independent O-methyltransferase family. In terms of assembly, homodimer. Expressed in roots, leaves, stems and flowers.

It is found in the cytoplasm. The catalysed reaction is N-acetylserotonin + S-adenosyl-L-methionine = melatonin + S-adenosyl-L-homocysteine + H(+). The protein operates within aromatic compound metabolism; melatonin biosynthesis; melatonin from serotonin: step 1/2. In terms of biological role, methyltransferase which catalyzes the transfer of a methyl group onto N-acetylserotonin, producing melatonin (N-acetyl-5-methoxytryptamine). The protein is Acetylserotonin O-methyltransferase 2 of Oryza sativa subsp. japonica (Rice).